A 301-amino-acid chain; its full sequence is UDP-3-O-acyl-N-acetylglucosamine deacetylase (301 aa).

The Zn(2+) site is built by H81, H237, and D241. Residue H264 is the Proton donor of the active site.

It belongs to the LpxC family. The cofactor is Zn(2+).

It catalyses the reaction a UDP-3-O-[(3R)-3-hydroxyacyl]-N-acetyl-alpha-D-glucosamine + H2O = a UDP-3-O-[(3R)-3-hydroxyacyl]-alpha-D-glucosamine + acetate. It functions in the pathway glycolipid biosynthesis; lipid IV(A) biosynthesis; lipid IV(A) from (3R)-3-hydroxytetradecanoyl-[acyl-carrier-protein] and UDP-N-acetyl-alpha-D-glucosamine: step 2/6. Its function is as follows. Catalyzes the hydrolysis of UDP-3-O-myristoyl-N-acetylglucosamine to form UDP-3-O-myristoylglucosamine and acetate, the committed step in lipid A biosynthesis. This chain is UDP-3-O-acyl-N-acetylglucosamine deacetylase, found in Leptospira borgpetersenii serovar Hardjo-bovis (strain JB197).